The sequence spans 226 residues: Thaumatin-like protein (226 aa).

The first 24 residues, 1–24, serve as a signal peptide directing secretion; that stretch reads MNFSKNLPLLVSLWAITFFAYTHA. Disulfide bonds link cysteine 33–cysteine 225, cysteine 74–cysteine 84, cysteine 89–cysteine 95, cysteine 140–cysteine 214, cysteine 145–cysteine 197, cysteine 153–cysteine 163, cysteine 167–cysteine 176, and cysteine 177–cysteine 184.

This sequence belongs to the thaumatin family. Expressed in fruits.

It localises to the secreted. 3D-structure modeling suggests it may have endo-(1,3)-beta-glucanase activity. In Olea europaea (Common olive), this protein is Thaumatin-like protein.